Reading from the N-terminus, the 67-residue chain is Conotoxin TsMMSK-B022 (67 aa).

Residues 1-22 form the signal peptide; that stretch reads MMSKLGVLLTICLLLFPLTAVS. The propeptide occupies 23-50; that stretch reads LDGDQPADLPELRAQDFAPERSPWFDPV. 3 disulfides stabilise this stretch: Cys53-Cys65, Cys54-Cys61, and Cys58-Cys64. Pro63 is subject to 4-hydroxyproline.

It belongs to the conotoxin M superfamily. In terms of tissue distribution, expressed by the venom duct.

It localises to the secreted. This Conus tessulatus (Tessellate cone) protein is Conotoxin TsMMSK-B022.